The chain runs to 493 residues: Cholesteryl ester transfer protein (493 aa).

The N-terminal stretch at 1–17 (MLAATVLTLALLGNAHA) is a signal peptide. N105 carries N-linked (GlcNAc...) (complex) asparagine glycosylation. C160 and C201 are joined by a disulfide. N257, N358, and N413 each carry an N-linked (GlcNAc...) asparagine glycan.

The protein belongs to the BPI/LBP/Plunc superfamily. BPI/LBP family. In terms of tissue distribution, expressed by the liver and secreted in plasma.

It localises to the secreted. The enzyme catalyses cholesteryl (9Z-octadecenoate)(in) = cholesteryl (9Z-octadecenoate)(out). The catalysed reaction is 1,2,3-tri-(9Z-octadecenoyl)-glycerol(in) = 1,2,3-tri-(9Z-octadecenoyl)-glycerol(out). It catalyses the reaction cholesteryl (9Z,12Z)-octadecadienoate(in) = cholesteryl (9Z,12Z)-octadecadienoate(out). Its function is as follows. Involved in the transfer of neutral lipids, including cholesteryl ester and triglyceride, among lipoprotein particles. Allows the net movement of cholesteryl ester from high density lipoproteins/HDL to triglyceride-rich very low density lipoproteins/VLDL, and the equimolar transport of triglyceride from VLDL to HDL. Regulates the reverse cholesterol transport, by which excess cholesterol is removed from peripheral tissues and returned to the liver for elimination. This is Cholesteryl ester transfer protein from Homo sapiens (Human).